Here is a 339-residue protein sequence, read N- to C-terminus: Glycerol-3-phosphate dehydrogenase [NAD(P)+] (339 aa).

The NADPH site is built by Ser15, Tyr16, His36, and Lys110. Sn-glycerol 3-phosphate is bound by residues Lys110, Gly139, and Thr141. Ala143 serves as a coordination point for NADPH. The sn-glycerol 3-phosphate site is built by Lys195, Asp248, Ser258, Arg259, and Asn260. The active-site Proton acceptor is Lys195. Arg259 provides a ligand contact to NADPH. NADPH is bound by residues Val283 and Glu285.

The protein belongs to the NAD-dependent glycerol-3-phosphate dehydrogenase family.

It is found in the cytoplasm. It carries out the reaction sn-glycerol 3-phosphate + NAD(+) = dihydroxyacetone phosphate + NADH + H(+). It catalyses the reaction sn-glycerol 3-phosphate + NADP(+) = dihydroxyacetone phosphate + NADPH + H(+). Its pathway is membrane lipid metabolism; glycerophospholipid metabolism. Catalyzes the reduction of the glycolytic intermediate dihydroxyacetone phosphate (DHAP) to sn-glycerol 3-phosphate (G3P), the key precursor for phospholipid synthesis. This chain is Glycerol-3-phosphate dehydrogenase [NAD(P)+], found in Erwinia tasmaniensis (strain DSM 17950 / CFBP 7177 / CIP 109463 / NCPPB 4357 / Et1/99).